We begin with the raw amino-acid sequence, 72 residues long: Defensin-like protein 230 (72 aa).

The signal sequence occupies residues 1–27 (MEKKSLACLSFLLLVLFVAQEIVVSEA). 4 cysteine pairs are disulfide-bonded: C30–C72, C41–C60, C45–C66, and C49–C68.

This sequence belongs to the DEFL family.

Its subcellular location is the secreted. The chain is Defensin-like protein 230 (PI230) from Pisum sativum (Garden pea).